Here is a 329-residue protein sequence, read N- to C-terminus: Vomeronasal type-1 receptor 42 (329 aa).

Topologically, residues 1–32 are extracellular; that stretch reads MGDILFSSPQSMFSHTMNKNSILHTHSIIGKT. A helical membrane pass occupies residues 33–53; the sequence is FFSEIGIGISGNSFLLLVHIL. At 54–65 the chain is on the cytoplasmic side; the sequence is KFIRGHRPRLTD. Residues 66-86 form a helical membrane-spanning segment; that stretch reads LPIGLLSLIHLLMLLVAAFIA. Residues 87–109 lie on the Extracellular side of the membrane; that stretch reads TDIFISRRGWDDIICKFLVYLYR. Cysteines 101 and 188 form a disulfide. Residues 110 to 130 traverse the membrane as a helical segment; it reads VLRGFSLCTTSMLSILQAIIL. At 131 to 150 the chain is on the cytoplasmic side; it reads SPRSSCLAKFKHISPHHISG. A helical membrane pass occupies residues 151–171; it reads AILFLSVLYMLIGSQLLVSII. Topologically, residues 172 to 209 are extracellular; that stretch reads ATPNLTMNDFIYVTQSCSILPLSYLMQSIYSTLLAIRE. N-linked (GlcNAc...) asparagine glycosylation occurs at N175. Residues 210 to 230 form a helical membrane-spanning segment; it reads FFLISLMVLSNWYMVALLSMH. The Cytoplasmic portion of the chain corresponds to 231–254; it reads RKQTQHLHGTNLSPKKSPEQSATQ. The chain crosses the membrane as a helical span at residues 255–275; sequence TILMLISFFLLMTIYDTIVSC. At 276–285 the chain is on the extracellular side; sequence SRTMFLNDPT. Residues 286–306 form a helical membrane-spanning segment; that stretch reads SYSIELFIMHIYATVSPFVFM. Topologically, residues 307 to 329 are cytoplasmic; that stretch reads STEKHIVNFLRSLGKRVINFNLH.

This sequence belongs to the G-protein coupled receptor 1 family.

It is found in the cell membrane. Its function is as follows. Putative pheromone receptor implicated in the regulation of social and reproductive behavior. The sequence is that of Vomeronasal type-1 receptor 42 (Vmn1r42) from Mus musculus (Mouse).